Here is a 525-residue protein sequence, read N- to C-terminus: Tigger transposable element-derived protein 2 (525 aa).

The 52-residue stretch at 1 to 52 (MLGKRKRVVLTIKDKLDIIKKLEEGISFKKLSVVYGIGESTVRDIKKNKERI) folds into the HTH psq-type domain. DNA-binding regions (H-T-H motif) lie at residues 28–48 (FKKL…IKKN) and 100–132 (TICA…FKQR). The HTH CENPB-type domain occupies 67–139 (KRKSMKSSTY…KQRHGIPKAA (73 aa)). One can recognise a DDE-1 domain in the interval 168–385 (LQPEQIYGAD…VKSSTITKAW (218 aa)). Positions 442–474 (QVLTDSESAEDQTKAAEQKPSSKSRKTELNPEK) are disordered.

This sequence belongs to the tigger transposable element derived protein family.

The protein localises to the nucleus. This chain is Tigger transposable element-derived protein 2 (TIGD2), found in Homo sapiens (Human).